Consider the following 399-residue polypeptide: Probable endo-xylogalacturonan hydrolase A (399 aa).

Residues Met-1–Ala-19 form the signal peptide. PbH1 repeat units lie at residues Thr-177–Glu-207, Ser-208–Pro-229, Cys-231–Ser-251, Val-260–Pro-283, and Val-293–Ser-314. The active-site Proton donor is the Asp-222. His-245 is an active-site residue. 2 N-linked (GlcNAc...) asparagine glycosylation sites follow: Asn-295 and Asn-382.

This sequence belongs to the glycosyl hydrolase 28 family.

The protein localises to the secreted. Its function is as follows. Pectinolytic enzyme involved in the degradation of xylogalacturonan (xga), a galacturonan backbone heavily substituted with xylose, and which is one important component of the hairy regions of pectin. Activity requires a galacturonic acid backbone substituted with xylose. The chain is Probable endo-xylogalacturonan hydrolase A (xghA) from Emericella nidulans (strain FGSC A4 / ATCC 38163 / CBS 112.46 / NRRL 194 / M139) (Aspergillus nidulans).